A 68-amino-acid polypeptide reads, in one-letter code: Conotoxin VnMMSK-01 (68 aa).

An N-terminal signal peptide occupies residues 1–20; the sequence is MMSKLGVLLTICLLLFPLTA. The propeptide occupies 21–50; it reads VPMDGDQPADLPALRTQDFEPERSPWFDPV. 3 disulfides stabilise this stretch: Cys53–Cys65, Cys54–Cys61, and Cys58–Cys64. A 4-hydroxyproline modification is found at Pro63.

The protein belongs to the conotoxin M superfamily. In terms of tissue distribution, expressed by the venom duct.

It is found in the secreted. This Conus ventricosus (Mediterranean cone) protein is Conotoxin VnMMSK-01.